We begin with the raw amino-acid sequence, 219 residues long: Probable GTP-binding protein EngB (219 aa).

Positions 24–207 constitute an EngB-type G domain; it reads VQPEIAFAGR…HALIESWLRP (184 aa). GTP contacts are provided by residues 32–39, 59–63, 81–84, 148–151, and 185–188; these read GRSNAGKS, GRTQH, DLPG, TKCD, and LFSA. The Mg(2+) site is built by Ser39 and Thr61.

The protein belongs to the TRAFAC class TrmE-Era-EngA-EngB-Septin-like GTPase superfamily. EngB GTPase family. It depends on Mg(2+) as a cofactor.

In terms of biological role, necessary for normal cell division and for the maintenance of normal septation. This is Probable GTP-binding protein EngB from Burkholderia thailandensis (strain ATCC 700388 / DSM 13276 / CCUG 48851 / CIP 106301 / E264).